The sequence spans 205 residues: Ribonuclease HII (205 aa).

In terms of domain architecture, RNase H type-2 spans 14 to 201; the sequence is EIVAGVDEAG…KGNINHSAIL (188 aa). A divalent metal cation-binding residues include aspartate 20, glutamate 21, and aspartate 111.

It belongs to the RNase HII family. Mn(2+) serves as cofactor. The cofactor is Mg(2+).

The protein localises to the cytoplasm. The catalysed reaction is Endonucleolytic cleavage to 5'-phosphomonoester.. In terms of biological role, endonuclease that specifically degrades the RNA of RNA-DNA hybrids. The polypeptide is Ribonuclease HII (Orientia tsutsugamushi (strain Boryong) (Rickettsia tsutsugamushi)).